Consider the following 809-residue polypeptide: Poly(A) polymerase (809 aa).

Positions 1-50 (MNKNGGPPVANITTSSTTITSTTTTQAKSQLPSSLSVNNLHTTQGSTDQP) are disordered. Low complexity predominate over residues 12 to 25 (ITTSSTTITSTTTT). Positions 26–50 (QAKSQLPSSLSVNNLHTTQGSTDQP) are enriched in polar residues. ATP contacts are provided by residues 133–135 (FGS), 146–148 (DID), Asp200, Lys262, Tyr271, and 280–281 (GV). Asp146, Asp148, and Asp200 together coordinate Mg(2+). Disordered regions lie at residues 529-760 (FVKD…QQIQ) and 785-809 (ISSS…IRGN). Basic and acidic residues predominate over residues 530–540 (VKDEGPEEPVK). The segment covering 572-655 (SPITTNINST…TPPTTTTINS (84 aa)) has biased composition (low complexity). The span at 656–665 (VQPPSAQPTE) shows a compositional bias: polar residues. Over residues 666–706 (NGSSTSNSPTSTSINNTALPPNPTTNSESTIETTITLPTTL) the composition is skewed to low complexity. A compositionally biased stretch (polar residues) spans 707-735 (ESQTSTLKDSNEISTNGTAVATEPTITSP). Low complexity-rich tracts occupy residues 736–760 (SVNI…QQIQ) and 785–794 (ISSSSETSQS).

The protein belongs to the poly(A) polymerase family. Mg(2+) is required as a cofactor. The cofactor is Mn(2+).

The protein localises to the nucleus. It catalyses the reaction RNA(n) + ATP = RNA(n)-3'-adenine ribonucleotide + diphosphate. Functionally, polymerase that creates the 3'-poly(A) tail of mRNA's. May acquire specificity through interaction with a cleavage and polyadenylation factor. This is Poly(A) polymerase (papA) from Dictyostelium discoideum (Social amoeba).